The primary structure comprises 199 residues: Recombination protein RecR (199 aa).

The C4-type zinc-finger motif lies at 57–72 (CNLCNNFSEQEICPLC). Residues 80–175 (TLLCIVEMPS…QVSRIARGLP (96 aa)) form the Toprim domain.

This sequence belongs to the RecR family.

In terms of biological role, may play a role in DNA repair. It seems to be involved in an RecBC-independent recombinational process of DNA repair. It may act with RecF and RecO. This chain is Recombination protein RecR, found in Methylobacillus flagellatus (strain ATCC 51484 / DSM 6875 / VKM B-1610 / KT).